The following is a 1904-amino-acid chain: Voltage-dependent calcium channel type A subunit alpha-1 (1904 aa).

The tract at residues 1 to 45 is disordered; it reads MLGGVGGRHMSTRRRGSSPLVRGGAGLTGYAGPGASGNSNDVAAI. The segment covering 23–35 has biased composition (gly residues); sequence GGAGLTGYAGPGA. Over 30–168 the chain is Cytoplasmic; that stretch reads YAGPGASGNS…KHTRFIIEWP (139 aa). The stretch at 155 to 447 is one I repeat; it reads NCIRKHTRFI…LVLGVLSGEF (293 aa). A helical transmembrane segment spans residues 169–187; that stretch reads PFEYAVLLTIIANCVVLAL. At 188–205 the chain is on the extracellular side; that stretch reads EEHLPKQDKTILAQKLEA. A helical transmembrane segment spans residues 206 to 225; sequence TEIYFLGIFCVEASLKILAL. Residues 226-237 are Cytoplasmic-facing; the sequence is GFVLHRGSYLRN. The chain crosses the membrane as a helical span at residues 238–259; it reads IWNIMDFFVVVTGFITAFSQGI. At 260–264 the chain is on the extracellular side; that stretch reads ELDMD. A helical transmembrane segment spans residues 265–283; that stretch reads LRTLRAIRVLRPLKLVSGI. The Cytoplasmic portion of the chain corresponds to 284–302; that stretch reads PSLQVVLKSIIKAMAPLLQ. A helical transmembrane segment spans residues 303–322; that stretch reads IGLLVLFAIVIFAIIGLEFY. At 323–419 the chain is on the extracellular side; the sequence is SGTLHKTCYS…WTNDALGSTY (97 aa). 2 N-linked (GlcNAc...) asparagine glycosylation sites follow: Asn353 and Asn367. Residues 420–444 form a helical membrane-spanning segment; sequence NWIYFIPLIVLGSFFMLNLVLGVLS. Topologically, residues 445–568 are cytoplasmic; it reads GEFAKEREKV…YWIRKSVKSQ (124 aa). Residues 513–543 form a disordered region; sequence KKLGKSKSTDTEEEEGDDDQDDGELSSSTKE. The span at 523–536 shows a compositional bias: acidic residues; that stretch reads TEEEEGDDDQDDGE. One copy of the II repeat lies at 554–797; that stretch reads EKRFRYWIRK…VFLAIAVDNL (244 aa). The helical transmembrane segment at 569–587 threads the bilayer; sequence KFYWFVIVLVFFNTVCVAV. The Extracellular portion of the chain corresponds to 588-602; the sequence is EHYGQPQWLTDFLYF. The helical transmembrane segment at 603 to 622 threads the bilayer; it reads AEFVFLALFMLEMFIKVYAL. The Cytoplasmic portion of the chain corresponds to 623–630; sequence GPRTYFDS. A helical transmembrane segment spans residues 631 to 649; that stretch reads SFNRFDCVVISGSIFEVIW. At 650 to 658 the chain is on the extracellular side; the sequence is SEVKSGSFG. A helical transmembrane segment spans residues 659-677; it reads LSVLRALRLLRIFKVTKYW. Residues 678–696 lie on the Cytoplasmic side of the membrane; sequence KSLRNLVISLLSSMRSIIS. Residues 697–716 traverse the membrane as a helical segment; that stretch reads LLFLLFLFILIFALLGMQLF. Residues 717–769 are Extracellular-facing; the sequence is GGQFNFDSGTPPTNFNTFPIALLTVFQILTGEDWNEVMYQGIESQGGHKKGMI. Residues 770–794 form a helical membrane-spanning segment; that stretch reads YSLYFIVLVLFGNYTLLNVFLAIAV. Residues 795 to 895 lie on the Cytoplasmic side of the membrane; sequence DNLANAQELS…VRRAAHWVVN (101 aa). The interval 827 to 869 is disordered; sequence QSLQNPKDGGAPKVEICPPNGKGGKQSSEEEKKQDEDDDTGPK. An III repeat occupies 890–1177; sequence AHWVVNLRYF…IITFQEQGEA (288 aa). A helical membrane pass occupies residues 896 to 914; it reads LRYFDFFIMVVISLSSIAL. The Extracellular portion of the chain corresponds to 915–930; sequence AAEDPVWEDSPRNEVL. Residues 931–950 form a helical membrane-spanning segment; the sequence is NYFDYAFTGVFTVEMILKII. Over 951-962 the chain is Cytoplasmic; that stretch reads DLGIILHPGSYL. A helical membrane pass occupies residues 963 to 981; it reads REFWNIMDAVVVICAAVSF. The Extracellular portion of the chain corresponds to 982 to 994; sequence AFDMTGSSAGQNL. Asn993 carries an N-linked (GlcNAc...) asparagine glycan. A helical transmembrane segment spans residues 995–1013; sequence STIKSLRVLRVLRPLKTIK. The Cytoplasmic portion of the chain corresponds to 1014–1032; sequence RVPKLKAVFDCVVNSLKNV. A helical membrane pass occupies residues 1033–1052; sequence INILIVYILFQFIFAVIAVQ. At 1053-1141 the chain is on the extracellular side; that stretch reads LFNGKFFYCS…EDKGPIQNFR (89 aa). Residues 1142–1166 form a helical membrane-spanning segment; it reads IEMSIFYIVYFIVFPFFFVNIFVAL. Residues 1167–1221 lie on the Cytoplasmic side of the membrane; that stretch reads IIITFQEQGEAELQDGEIDKNQKSCIDFTIQARPLERYMPKERNSVKYKIWRIVV. Residues 1214–1470 form an IV repeat; that stretch reads YKIWRIVVST…DNFDYLTRDS (257 aa). A helical transmembrane segment spans residues 1222–1250; the sequence is STPFEYFIMGLIVLNTVLLMMKFHRQSDA. Over 1251-1255 the chain is Extracellular; that stretch reads YKNTL. A helical transmembrane segment spans residues 1256-1275; it reads KYMNMCFTGMFTVECILKIA. Topologically, residues 1276–1283 are cytoplasmic; it reads AFGVRNFF. The helical transmembrane segment at 1284–1302 threads the bilayer; that stretch reads KDAWNTFDFITVIGSIVDA. The Extracellular segment spans residues 1303-1309; it reads LVIEFGE. The helical transmembrane segment at 1310 to 1328 threads the bilayer; it reads NFINVGFLRLFRAARLIKL. Over 1329-1347 the chain is Cytoplasmic; the sequence is LRQGYTIRILLWTFVQSFK. A helical transmembrane segment spans residues 1348 to 1367; sequence ALPYVCLLIAMLFFIYAIIG. Residues 1368-1431 lie on the Extracellular side of the membrane; the sequence is MQVFGNIALD…AKAGKQEGGC (64 aa). The interval 1430–1471 is phenylalkylamine binding; sequence GCGSNIAYAYFVSFIFFCSFLMLNLFVAVIMDNFDYLTRDSS. Residues 1432 to 1456 form a helical membrane-spanning segment; sequence GSNIAYAYFVSFIFFCSFLMLNLFV. Residues 1457 to 1904 are Cytoplasmic-facing; that stretch reads AVIMDNFDYL…HSDSDEDDWC (448 aa). Positions 1476–1511 constitute an EF-hand domain; sequence HHLDEFVRIWAEYDPNATGKIHYTEMYDMLKNMDPP. Ca(2+) contacts are provided by Asp1489, Asn1491, Thr1493, Lys1495, and Glu1500. Disordered stretches follow at residues 1652-1694, 1710-1788, and 1870-1904; these read THTG…HEGP, THHP…HSYP, and GGRL…DDWC. A compositionally biased stretch (low complexity) spans 1670–1681; that stretch reads RSPSLRHSPGRP. The span at 1682–1691 shows a compositional bias: basic and acidic residues; that stretch reads GYDHHGHYYH. Residues 1710–1725 show a composition bias toward basic residues; that stretch reads THHPHPSQYNHRHRMR. Over residues 1727 to 1740 the composition is skewed to low complexity; sequence PWSASTSPARTPSP. Residues 1751–1762 are compositionally biased toward polar residues; the sequence is GTTSLEQRSRSP. Over residues 1771 to 1784 the composition is skewed to basic residues; sequence PHTHQHYHRHHPHQ.

The protein belongs to the calcium channel alpha-1 subunit (TC 1.A.1.11) family. CACNA1I subfamily. In terms of assembly, interacts with CATSPER1 and CATSPER2, leading to suppress T-type calcium channel activity.

Its subcellular location is the membrane. Voltage-sensitive calcium channels (VSCC) mediate the entry of calcium ions into excitable cells and are also involved in a variety of calcium-dependent processes, including muscle contraction, neurotransmitter release, gene expression, cell motility, cell division and cell death. In Apis mellifera (Honeybee), this protein is Voltage-dependent calcium channel type A subunit alpha-1 (CAC).